The following is a 371-amino-acid chain: Leu/Ile/Val-binding protein homolog 1 (371 aa).

A signal peptide spans 1 to 23; the sequence is MRKTLFSGVALAAVIAFGGSAWA.

The protein belongs to the leucine-binding protein family.

In terms of biological role, component of an amino-acid transport system. The protein is Leu/Ile/Val-binding protein homolog 1 of Brucella abortus (strain 2308).